The chain runs to 596 residues: MAVKGKVLRVRGPVVIAEDMQGVQMYEVVEVGKDGLVGEVTRITGDKAVIQVYEDTTGITPGEPVVGTGSPFSVELGPGLLSHIFDGILRPLESIHEVAKSPFIKRGIKVPSLDRSKKWEWRPNPELKPGDKVSGDDILGTVPETPLIEHKVMVPPNVVPVDKAATLKWLAPAGEYTIEDTIAVVEYEGKEIELKMYHRWPIRRPRPVKEKFEPVTPLITGVRVLDTLFPMAKGGTGAIPGPFGSGKTVTLRTLAAWSDAKVVIYVGCGERGNEMTDVLVNFPHYKDPWSGRPLMERTILVANTSNMPVAAREASIYVGVTLAEYYRDMGYDSLLIADSTSRWAEALRDIAGRMEEMPAEEGFPPYLASRLAEYYERAGRARIPGRPERVGSVTIASAVSPPGGDFSEPVTSHTRRFVRVFWALDASLAYARHYPAINWLVSYSLYVDTVAKWWHENISPKWKEYRDEMMSILLKEDELKEIVRLVGPESLSEPDKLIIETARIIKEAFLQQNAFDPIDAFCSPKKQFLMMKIIIDFYRKAKELVNAGVPVATIREAVKEEVAELIRSRFTVRNEELEKLEDLYARFMEKLSSLSP.

241–248 serves as a coordination point for ATP; sequence GPFGSGKT.

This sequence belongs to the ATPase alpha/beta chains family. Has multiple subunits with at least A(3), B(3), C, D, E, F, H, I and proteolipid K(x).

The protein localises to the cell membrane. The enzyme catalyses ATP + H2O + 4 H(+)(in) = ADP + phosphate + 5 H(+)(out). Functionally, component of the A-type ATP synthase that produces ATP from ADP in the presence of a proton gradient across the membrane. The A chain is the catalytic subunit. The polypeptide is A-type ATP synthase subunit A (Ignicoccus hospitalis (strain KIN4/I / DSM 18386 / JCM 14125)).